We begin with the raw amino-acid sequence, 101 residues long: Urease subunit beta (101 aa).

It belongs to the urease beta subunit family. As to quaternary structure, heterotrimer of UreA (gamma), UreB (beta) and UreC (alpha) subunits. Three heterotrimers associate to form the active enzyme.

It is found in the cytoplasm. It catalyses the reaction urea + 2 H2O + H(+) = hydrogencarbonate + 2 NH4(+). It participates in nitrogen metabolism; urea degradation; CO(2) and NH(3) from urea (urease route): step 1/1. The chain is Urease subunit beta from Dinoroseobacter shibae (strain DSM 16493 / NCIMB 14021 / DFL 12).